Consider the following 173-residue polypeptide: Oleosin 18.5 kDa (173 aa).

Residues 1–45 (MADTARGTHHDIIGRDQYPMMGRDRDQYQMSGRGSDYSKSRQIAK) form a polar region. The tract at residues 46–117 (AATAVTAGGS…AAITVFSWIY (72 aa)) is hydrophobic. The next 3 helical transmembrane spans lie at 54–74 (GSLLVLSSLTLVGTVIALTVA), 76–96 (PLLVIFSPILVPALITVALLI), and 97–117 (TGFLSSGGFGIAAITVFSWIY). The tract at residues 151 to 173 (YYGQQHTGGEHDRDRTRGGQHTT) is disordered. The span at 158–167 (GGEHDRDRTR) shows a compositional bias: basic and acidic residues.

The protein belongs to the oleosin family.

The protein resides in the lipid droplet. It localises to the membrane. Functionally, may have a structural role to stabilize the lipid body during desiccation of the seed by preventing coalescence of the oil. Probably interacts with both lipid and phospholipid moieties of lipid bodies. May also provide recognition signals for specific lipase anchorage in lipolysis during seedling growth. This chain is Oleosin 18.5 kDa, found in Arabidopsis thaliana (Mouse-ear cress).